Reading from the N-terminus, the 123-residue chain is Small ribosomal subunit protein uS12 (123 aa).

Asp-89 carries the 3-methylthioaspartic acid modification.

This sequence belongs to the universal ribosomal protein uS12 family. Part of the 30S ribosomal subunit. Contacts proteins S8 and S17. May interact with IF1 in the 30S initiation complex.

With S4 and S5 plays an important role in translational accuracy. Functionally, interacts with and stabilizes bases of the 16S rRNA that are involved in tRNA selection in the A site and with the mRNA backbone. Located at the interface of the 30S and 50S subunits, it traverses the body of the 30S subunit contacting proteins on the other side and probably holding the rRNA structure together. The combined cluster of proteins S8, S12 and S17 appears to hold together the shoulder and platform of the 30S subunit. This is Small ribosomal subunit protein uS12 from Bartonella bacilliformis (strain ATCC 35685 / KC583 / Herrer 020/F12,63).